Reading from the N-terminus, the 332-residue chain is Probable sugar phosphate/phosphate translocator At1g53660 (332 aa).

The next 10 helical transmembrane spans lie at 19 to 39, 46 to 66, 82 to 102, 120 to 140, 143 to 163, 165 to 185, 199 to 219, 233 to 253, 259 to 281, and 285 to 304; these read ASIL…KWVL, FPYP…LCFL, LEIY…TLWL, AIMP…IMSC, LLIM…ELNI, WVGV…LILM, LSLM…PWIF, LVLS…FLVI, LTIR…LLFA, and LTII…ATYN. Over residues 312–322 the composition is skewed to polar residues; that stretch reads ESITLVSQSPK. The disordered stretch occupies residues 312–332; sequence ESITLVSQSPKNSDKKPDGPL. Positions 323–332 are enriched in basic and acidic residues; the sequence is NSDKKPDGPL.

Belongs to the TPT transporter family. TPT (TC 2.A.7.9) subfamily.

It is found in the membrane. The sequence is that of Probable sugar phosphate/phosphate translocator At1g53660 from Arabidopsis thaliana (Mouse-ear cress).